The following is a 68-amino-acid chain: Large ribosomal subunit protein bL35 (68 aa).

The protein belongs to the bacterial ribosomal protein bL35 family.

This is Large ribosomal subunit protein bL35 from Orientia tsutsugamushi (strain Ikeda) (Rickettsia tsutsugamushi).